Reading from the N-terminus, the 146-residue chain is Anti-sigma F factor (146 aa).

It belongs to the anti-sigma-factor family.

It carries out the reaction L-seryl-[protein] + ATP = O-phospho-L-seryl-[protein] + ADP + H(+). The enzyme catalyses L-threonyl-[protein] + ATP = O-phospho-L-threonyl-[protein] + ADP + H(+). Its function is as follows. Binds to sigma F and blocks its ability to form an RNA polymerase holoenzyme (E-sigma F). Phosphorylates SpoIIAA on a serine residue. This phosphorylation may enable SpoIIAA to act as an anti-anti-sigma factor that counteracts SpoIIAB and thus releases sigma F from inhibition. The polypeptide is Anti-sigma F factor (Geobacillus sp. (strain WCH70)).